Reading from the N-terminus, the 127-residue chain is Small ribosomal subunit protein uS13 (127 aa).

Positions 90–127 (KRHREGLPVNGQRTRTNARTRKGKRKTVAGRSQSTQKK) are disordered. Over residues 105–117 (TNARTRKGKRKTV) the composition is skewed to basic residues.

The protein belongs to the universal ribosomal protein uS13 family. In terms of assembly, part of the 30S ribosomal subunit. Forms a loose heterodimer with protein S19. Forms two bridges to the 50S subunit in the 70S ribosome.

Functionally, located at the top of the head of the 30S subunit, it contacts several helices of the 16S rRNA. In the 70S ribosome it contacts the 23S rRNA (bridge B1a) and protein L5 of the 50S subunit (bridge B1b), connecting the 2 subunits; these bridges are implicated in subunit movement. Contacts the tRNAs in the A and P-sites. This chain is Small ribosomal subunit protein uS13, found in Salinibacter ruber (strain DSM 13855 / M31).